A 570-amino-acid chain; its full sequence is Ribosome-inactivating protein SNAIf (570 aa).

A signal peptide spans 1 to 28; that stretch reads MRVVTKLLYLVVLAICGLGIHGALTHTR. 3 N-linked (GlcNAc...) asparagine glycosylation sites follow: N40, N62, and N140. Residue E199 is part of the active site. N232 carries an N-linked (GlcNAc...) asparagine glycan. Disulfide bonds link C284-C316, C332-C351, and C373-C385. 2 Ricin B-type lectin domains span residues 319 to 439 and 441 to 566; these read VEVT…WTVG and VEPL…WITT. One copy of the 1-alpha repeat lies at 329–369; sequence DGLCVDVRDGHYIDGNTVQLGPCGNECNQLWTFRTDGTIRW. A 1-beta repeat occupies 370 to 405; sequence LGKCLTTSSSVMIYDCNTVPPEATKWVVSTDGTITN. One copy of the 1-gamma repeat lies at 408–440; the sequence is SGLVLTAPQAAEGTALSLENNIHAARQGWTVGD. Residues 452 to 489 form a 2-alpha repeat; the sequence is KQMCLTENGENNFVWLEDCVLNRVEQEWALYGDGTIRV. Residues C455 and C470 are joined by a disulfide bond. N492 carries an N-linked (GlcNAc...) asparagine glycan. One copy of the 2-beta repeat lies at 493-531; the sequence is RSLCVTSEDHEPSDLIVILKCEGSGNQRWVFNTNGTISN. A disulfide bridge links C496 with C513. N-linked (GlcNAc...) asparagine glycans are attached at residues N526 and N544. The 2-gamma repeat unit spans residues 534–567; sequence AKLVMDVAQSNVSLRKIILYPPTGNPNQQWITTT.

It belongs to the ribosome-inactivating protein family. Type 2 RIP subfamily. Tetramer of four pairs of disulfide bound A-B chains. Post-translationally, the precursor is processed in two chains, A and B, that are linked by a disulfide bond. A small truncated form corresponding roughly to the second ricin B-type lectin domain of the B chain, TrSNAIf, can also be produced. In terms of processing, N-glycosylated. As to expression, expressed in fruits.

The enzyme catalyses Endohydrolysis of the N-glycosidic bond at one specific adenosine on the 28S rRNA.. In terms of biological role, neu5Ac(alpha2-6)Gal/GalNAc specific agglutinin. Behaves as a type-2 ribosome-inactivating protein. Strongly inhibits mammalian but not plant ribosomes. The A chain is responsible for inhibiting protein synthesis through the catalytic inactivation of 60S ribosomal subunits by removing adenine from position 4,324 of 28S rRNA. The B chain binds to cell receptors and probably facilitates the entry into the cell of the A chain; B chains are also responsible for cell agglutination (lectin activity). Involved in plant defense against insects. Its function is as follows. Binds Neu5Ac(alpha2-6)Gal/GalNAc but has no clear agglutination activity. The polypeptide is Ribosome-inactivating protein SNAIf (Sambucus nigra (European elder)).